The chain runs to 180 residues: Oligoribonuclease (180 aa).

The region spanning 7–170 is the Exonuclease domain; it reads LIWIDLEMTG…DDIRESIAEL (164 aa). Tyrosine 128 is a catalytic residue.

This sequence belongs to the oligoribonuclease family.

The protein resides in the cytoplasm. Its function is as follows. 3'-to-5' exoribonuclease specific for small oligoribonucleotides. The chain is Oligoribonuclease from Pseudomonas aeruginosa (strain UCBPP-PA14).